The chain runs to 207 residues: Inhibitor of hydrogen peroxide resistance (207 aa).

The segment at residues 163 to 182 (MNYIHQRTRISRSVVAEVLA) is a DNA-binding region (H-T-H motif).

The protein belongs to the IprA family.

Involved in oxidative stress resistance. This is Inhibitor of hydrogen peroxide resistance from Escherichia coli O157:H7.